A 641-amino-acid chain; its full sequence is Soluble starch synthase 1, chloroplastic/amyloplastic (641 aa).

Lys-145 is an ADP-alpha-D-glucose binding site.

The protein belongs to the glycosyltransferase 1 family. Bacterial/plant glycogen synthase subfamily. As to expression, high expression in leaves and very low in tubers.

Its subcellular location is the plastid. It localises to the chloroplast. The protein resides in the amyloplast. The catalysed reaction is [(1-&gt;4)-alpha-D-glucosyl](n) + ADP-alpha-D-glucose = [(1-&gt;4)-alpha-D-glucosyl](n+1) + ADP + H(+). It participates in glycan biosynthesis; starch biosynthesis. Functionally, plays a minor role in starch synthesis in storage organs (tubers), but may contribute to the deposition of transient starch in chloroplasts of leaves. The polypeptide is Soluble starch synthase 1, chloroplastic/amyloplastic (Solanum tuberosum (Potato)).